Consider the following 296-residue polypeptide: 33 kDa chaperonin (296 aa).

Intrachain disulfides connect C238–C240 and C271–C274.

Belongs to the HSP33 family. Under oxidizing conditions two disulfide bonds are formed involving the reactive cysteines. Under reducing conditions zinc is bound to the reactive cysteines and the protein is inactive.

The protein resides in the cytoplasm. Redox regulated molecular chaperone. Protects both thermally unfolding and oxidatively damaged proteins from irreversible aggregation. Plays an important role in the bacterial defense system toward oxidative stress. This chain is 33 kDa chaperonin, found in Clostridium botulinum (strain 657 / Type Ba4).